The chain runs to 373 residues: Arfaptin-1 (373 aa).

Residues 1–47 (MAQESPKNSAAEIPVTSNGEVDDSREHSFNRDLKHSLPSGLGLSETQ) are disordered. At Ala-2 the chain carries N-acetylalanine. 7 positions are modified to phosphoserine: Ser-5, Ser-28, Ser-36, Ser-39, Ser-69, Ser-79, and Ser-132. A compositionally biased stretch (basic and acidic residues) spans 22–35 (DDSREHSFNRDLKH). The AH domain occupies 153–353 (TVDLELEAQI…NQKQLEQTLK (201 aa)). At Thr-361 the chain carries Phosphothreonine.

Forms homodimers or heterodimers with ARFIP2. Interacts with non-myristoylated GTP-bound ARF3, but not to GDP-bound ARF3. Interacts with ARF1. Binds with lower affinity to ARF5 and with very little affinity to ARF6. Interacts with ARL1. Interacts with ATG9A. Post-translationally, phosphorylated by PRKD1; phosphorylation delocalizes ARFIP1 from the Golgi and disrupts its ability to inhibit the activity of ADP-ribosylation factor, an important component of the vesicle scission machinery. As to expression, ubiquitously expressed. Higher levels in liver, pancreas, placenta, skeletal muscle and heart.

The protein resides in the golgi apparatus. It is found in the trans-Golgi network membrane. Plays a role in controlling biogenesis of secretory granules at the trans-Golgi network. Mechanistically, binds ARF-GTP at the neck of a growing secretory granule precursor and forms a protective scaffold. Once the granule precursor has been completely loaded, active PRKD1 phosphorylates ARFIP1 and releases it from ARFs. In turn, ARFs induce fission. Through this mechanism, ensures proper secretory granule formation at the Golgi of pancreatic beta cells. The sequence is that of Arfaptin-1 from Homo sapiens (Human).